The primary structure comprises 310 residues: Putative S-adenosyl-L-methionine-dependent methyltransferase MUL_4763 (310 aa).

Residues Asp-137 and Asp-166–Leu-167 contribute to the S-adenosyl-L-methionine site.

Belongs to the UPF0677 family.

Functionally, exhibits S-adenosyl-L-methionine-dependent methyltransferase activity. The chain is Putative S-adenosyl-L-methionine-dependent methyltransferase MUL_4763 from Mycobacterium ulcerans (strain Agy99).